The following is a 237-amino-acid chain: 1-(5-phosphoribosyl)-5-[(5-phosphoribosylamino)methylideneamino] imidazole-4-carboxamide isomerase (237 aa).

The active-site Proton acceptor is the Asp8. Asp128 (proton donor) is an active-site residue.

Belongs to the HisA/HisF family.

The protein localises to the cytoplasm. It carries out the reaction 1-(5-phospho-beta-D-ribosyl)-5-[(5-phospho-beta-D-ribosylamino)methylideneamino]imidazole-4-carboxamide = 5-[(5-phospho-1-deoxy-D-ribulos-1-ylimino)methylamino]-1-(5-phospho-beta-D-ribosyl)imidazole-4-carboxamide. Its pathway is amino-acid biosynthesis; L-histidine biosynthesis; L-histidine from 5-phospho-alpha-D-ribose 1-diphosphate: step 4/9. The chain is 1-(5-phosphoribosyl)-5-[(5-phosphoribosylamino)methylideneamino] imidazole-4-carboxamide isomerase from Gemmatimonas aurantiaca (strain DSM 14586 / JCM 11422 / NBRC 100505 / T-27).